The sequence spans 478 residues: UDP-N-acetylmuramate--L-alanine ligase (478 aa).

120-126 (GSHGKTT) provides a ligand contact to ATP.

This sequence belongs to the MurCDEF family.

Its subcellular location is the cytoplasm. The enzyme catalyses UDP-N-acetyl-alpha-D-muramate + L-alanine + ATP = UDP-N-acetyl-alpha-D-muramoyl-L-alanine + ADP + phosphate + H(+). Its pathway is cell wall biogenesis; peptidoglycan biosynthesis. Its function is as follows. Cell wall formation. This is UDP-N-acetylmuramate--L-alanine ligase from Rickettsia bellii (strain OSU 85-389).